Consider the following 264-residue polypeptide: Transmembrane protein 41A (264 aa).

A signal peptide spans 1–17 (MRALLGLLLVFGGCTFA). Helical transmembrane passes span 67 to 87 (AYVFLLFCSAYLYKQGFAIPG), 100 to 122 (GPWLGLLLCCVLTSVGATGCYLL), 153 to 173 (LFFFLLFLRLFPMTPNWFLNL), 175 to 195 (APILNIPIVQFFFSVLIGLIP), and 219 to 239 (WETVLKLLAIALVALVPGTLI). A VTT domain region spans residues 96-207 (GALFGPWLGL…FICVQTGSIL (112 aa)).

This sequence belongs to the TMEM41 family.

It localises to the membrane. The protein is Transmembrane protein 41A (Tmem41a) of Mus musculus (Mouse).